Reading from the N-terminus, the 306-residue chain is Ornithine carbamoyltransferase (306 aa).

Carbamoyl phosphate is bound by residues 54–57 (STRT), Q81, R105, and 132–135 (HPLQ). L-ornithine-binding positions include N162, D226, and 230–231 (SM). Residues 266-267 (CL) and R294 contribute to the carbamoyl phosphate site.

Belongs to the aspartate/ornithine carbamoyltransferase superfamily. OTCase family.

The protein localises to the cytoplasm. The enzyme catalyses carbamoyl phosphate + L-ornithine = L-citrulline + phosphate + H(+). The protein operates within amino-acid biosynthesis; L-arginine biosynthesis; L-arginine from L-ornithine and carbamoyl phosphate: step 1/3. Reversibly catalyzes the transfer of the carbamoyl group from carbamoyl phosphate (CP) to the N(epsilon) atom of ornithine (ORN) to produce L-citrulline. This chain is Ornithine carbamoyltransferase, found in Sulfurisphaera tokodaii (strain DSM 16993 / JCM 10545 / NBRC 100140 / 7) (Sulfolobus tokodaii).